A 1277-amino-acid polypeptide reads, in one-letter code: NPC intracellular cholesterol transporter 1 (1277 aa).

A signal peptide spans 1-22 (MGAHHPALGLLLLLLCPAQVFS). Over 23–269 (QSCVWYGECG…WRIWGLDAMY (247 aa)) the chain is Lumenal. Disulfide bonds link C25-C74, C31-C42, C63-C109, C75-C113, C97-C238, C100-C160, C177-C184, C227-C243, and C240-C247. Residue N41 coordinates cholesterol. A glycan (N-linked (GlcNAc...) asparagine) is linked at N70. Residue Q79 coordinates cholesterol. N-linked (GlcNAc...) asparagine glycosylation is found at N122 and N137. The interval 175-205 (LLCGRDARACNATNWIEYMFNKDNGQAPFTI) is important for cholesterol binding and cholesterol transfer from NPC1 to liposomes. N-linked (GlcNAc...) asparagine glycans are attached at residues N185, N222, and N228. Residues 270 to 290 (VIMWVTYVAFLFVFFGALLAV) traverse the membrane as a helical segment. Over 291–350 (WCHRRRYFVSEYTPIDSNIAFSVNSSDKGEASCCDPLGAAFDDCLRRMFTKWGAFCVRNP) the chain is Cytoplasmic. A helical membrane pass occupies residues 351-371 (TCIIFFSLAFITVCSSGLVFV). The Lumenal portion of the chain corresponds to 372–621 (QVTTNPVELW…ELNRESNSDV (250 aa)). N414, N459, N478, and N524 each carry an N-linked (GlcNAc...) asparagine glycan. 2 cysteine pairs are disulfide-bonded: C468/C479 and C516/C533. One can recognise an SSD domain in the interval 620-785 (DVFTVIISYV…ITCFVSLLGL (166 aa)). A helical membrane pass occupies residues 622 to 642 (FTVIISYVVMFLYISLALGHI). Residues 643–653 (QSCSRLLVDSK) are Cytoplasmic-facing. A helical membrane pass occupies residues 654-674 (ISLGIAGILIVLSSVACSLGI). Residues 675–683 (FSYMGMPLT) lie on the Lumenal side of the membrane. A helical membrane pass occupies residues 684–704 (LIVIEVIPFLVLAVGVDNIFI). The Cytoplasmic segment spans residues 705 to 730 (LVQTYQRDERLQEETLDQQLGRILGE). The helical transmembrane segment at 731 to 751 (VAPTMFLSSFSETSAFFFGAL) threads the bilayer. The Lumenal segment spans residues 752-759 (SSMPAVHT). A helical transmembrane segment spans residues 760 to 780 (FSLFAGMAVLIDFLLQITCFV). Topologically, residues 781 to 832 (SLLGLDIKRQEKNHLDILCCVRGADDGQGSHASESYLFRFFKNYFAPLLLKD) are cytoplasmic. A helical membrane pass occupies residues 833–853 (WLRPIVVAVFVGVLSFSVAVV). Topologically, residues 854–1097 (NKVDIGLDQS…EQYLTIIDDT (244 aa)) are lumenal. 2 N-linked (GlcNAc...) asparagine glycosylation sites follow: N868 and N898. The cysteines at positions 909 and 914 are disulfide-linked. N916, N961, N968, and N1063 each carry an N-linked (GlcNAc...) asparagine glycan. 3 disulfide bridges follow: C956-C1011, C957-C979, and C967-C976. Residues 1098–1118 (IFNLSVSLGSIFLVTLVVLGC) form a helical membrane-spanning segment. Residues 1119-1123 (ELWSA) lie on the Cytoplasmic side of the membrane. The helical transmembrane segment at 1124 to 1144 (VIMCITIAMILVNMFGVMWLW) threads the bilayer. A topological domain (lumenal) is located at residue G1145. A helical transmembrane segment spans residues 1146-1166 (ISLNAVSLVNLVMSCGISVEF). The Cytoplasmic segment spans residues 1167–1194 (CSHITRAFTMSTKGSRVSRAEEALAHMG). The helical transmembrane segment at 1195–1215 (SSVFSGITLTKFGGIVVLAFA) threads the bilayer. Topologically, residues 1216-1226 (KSQIFEIFYFR) are lumenal. A helical membrane pass occupies residues 1227 to 1247 (MYLAMVLLGATHGLIFLPVLL). Topologically, residues 1248 to 1277 (SYIGPSVNKAKRHTTYERYRGTERERLLNF) are cytoplasmic. Residues 1274 to 1277 (LLNF) form a required for location in lysosomes region. The short motif at 1274-1277 (LLNF) is the Di-leucine motif element.

It belongs to the patched family. In terms of assembly, interacts (via the second lumenal domain) with NPC2. Interacts with TMEM97; the interaction may decrease NPC1 availability to the cell. Interacts with TIM1. Interacts with SLC38A9; this interaction inhibits cholesterol-mediated mTORC1 activation via its sterol transport activity. Post-translationally, N-glycosylated. In terms of tissue distribution, detected in liver (at protein level). Ubiquitous. Detected in adult heart, spleen, lung, liver, skeletal muscle, kidney, testis.

The protein resides in the late endosome membrane. It localises to the lysosome membrane. It carries out the reaction cholesterol(in) = cholesterol(out). Intracellular cholesterol transporter which acts in concert with NPC2 and plays an important role in the egress of cholesterol from the endosomal/lysosomal compartment. Unesterified cholesterol that has been released from LDLs in the lumen of the late endosomes/lysosomes is transferred by NPC2 to the cholesterol-binding pocket in the N-terminal domain of NPC1. Cholesterol binds to NPC1 with the hydroxyl group buried in the binding pocket. May play a role in vesicular trafficking in glia, a process that may be crucial for maintaining the structural and functional integrity of nerve terminals. Inhibits cholesterol-mediated mTORC1 activation throught its interaction with SLC38A9. The polypeptide is NPC intracellular cholesterol transporter 1 (Mus musculus (Mouse)).